The primary structure comprises 127 residues: Small ribosomal subunit protein uS13 (127 aa).

The disordered stretch occupies residues 93–127; the sequence is RRSLPVRGQRTHTNARTRKGPRRGTVAGKKKATKT.

This sequence belongs to the universal ribosomal protein uS13 family. In terms of assembly, part of the 30S ribosomal subunit. Forms a loose heterodimer with protein S19. Forms two bridges to the 50S subunit in the 70S ribosome.

In terms of biological role, located at the top of the head of the 30S subunit, it contacts several helices of the 16S rRNA. In the 70S ribosome it contacts the 23S rRNA (bridge B1a) and protein L5 of the 50S subunit (bridge B1b), connecting the 2 subunits; these bridges are implicated in subunit movement. Contacts the tRNAs in the A and P-sites. This chain is Small ribosomal subunit protein uS13, found in Acidobacterium capsulatum (strain ATCC 51196 / DSM 11244 / BCRC 80197 / JCM 7670 / NBRC 15755 / NCIMB 13165 / 161).